The sequence spans 67 residues: uncharacterized protein (67 aa).

Residues 17-47 (AASLQELEKKINTQIENNKAIMLRVKSVSHQ) adopt a coiled-coil conformation.

This is an uncharacterized protein from Bacillus subtilis (strain 168).